Reading from the N-terminus, the 167-residue chain is Transcription factor E (167 aa).

In terms of domain architecture, HTH TFE/IIEalpha-type spans 5–87 (ENPIHRAYLL…LWKICPESLD (83 aa)).

Belongs to the TFE family. As to quaternary structure, monomer. Interaction with RNA polymerase subunits RpoF and RpoE is necessary for Tfe stimulatory transcription activity. Able to interact with Tbp and RNA polymerase in the absence of DNA promoter. Interacts both with the preinitiation and elongation complexes.

Functionally, transcription factor that plays a role in the activation of archaeal genes transcribed by RNA polymerase. Facilitates transcription initiation by enhancing TATA-box recognition by TATA-box-binding protein (Tbp), and transcription factor B (Tfb) and RNA polymerase recruitment. Not absolutely required for transcription in vitro, but particularly important in cases where Tbp or Tfb function is not optimal. It dynamically alters the nucleic acid-binding properties of RNA polymerases by stabilizing the initiation complex and destabilizing elongation complexes. Seems to translocate with the RNA polymerase following initiation and acts by binding to the non template strand of the transcription bubble in elongation complexes. The protein is Transcription factor E of Methanothrix thermoacetophila (strain DSM 6194 / JCM 14653 / NBRC 101360 / PT) (Methanosaeta thermophila).